We begin with the raw amino-acid sequence, 457 residues long: Acetylcholine receptor subunit alpha-1-B (457 aa).

Positions 1–20 (MDYTASCLIFLFIAAGTVFG) are cleaved as a signal peptide. Over 21–230 (TDHETRLIGD…ITYHFVLQRL (210 aa)) the chain is Extracellular. Intrachain disulfides connect Cys-148–Cys-162 and Cys-212–Cys-213. Asn-161 carries an N-linked (GlcNAc...) asparagine glycan. 3 consecutive transmembrane segments (helical) span residues 231-255 (PLYF…VFYL), 263-281 (MTLS…LVIV), and 297-316 (YMLF…VIVI). The Cytoplasmic portion of the chain corresponds to 317–428 (NTHHRSPSTH…WKFVAMVLDH (112 aa)). A helical membrane pass occupies residues 429–447 (ILLAVFMTVCVIGTLAVFA).

This sequence belongs to the ligand-gated ion channel (TC 1.A.9) family. Acetylcholine receptor (TC 1.A.9.1) subfamily. Alpha-1/CHRNA1 sub-subfamily. One of the alpha chains that assemble within the acetylcholine receptor, a pentamer of two alpha chains, a beta, a delta, and a gamma or epsilon chains.

The protein localises to the postsynaptic cell membrane. Its subcellular location is the cell membrane. The catalysed reaction is K(+)(in) = K(+)(out). It carries out the reaction Na(+)(in) = Na(+)(out). Functionally, upon acetylcholine binding, the AChR responds by an extensive change in conformation that affects all subunits and leads to opening of an ion-conducting channel across the plasma membrane. This is Acetylcholine receptor subunit alpha-1-B (chrna1-b) from Xenopus laevis (African clawed frog).